Consider the following 179-residue polypeptide: Transcription factor 21 (179 aa).

The tract at residues 20–87 (CDGLKMDSNK…QVQRNAANAR (68 aa)) is disordered. Low complexity predominate over residues 33 to 46 (TSNESTEESSNCEN). A compositionally biased stretch (polar residues) spans 70 to 80 (SGVSQEGKQVQ). The 53-residue stretch at 79-131 (VQRNAANARERARMRVLSKAFSRLKTTLPWVPPDTKLSKLDTLRLASSYIAHL) folds into the bHLH domain.

Efficient DNA binding requires dimerization with another bHLH protein. Forms a heterodimer with TCF3 and binds the E box (5'-CANNTG-3').

The protein localises to the nucleus. Functionally, involved in epithelial-mesenchymal interactions in kidney and lung morphogenesis that include epithelial differentiation and branching morphogenesis. May play a role in the specification or differentiation of one or more subsets of epicardial cell types. The polypeptide is Transcription factor 21 (TCF21) (Homo sapiens (Human)).